A 281-amino-acid polypeptide reads, in one-letter code: 32 kDa heat shock protein (281 aa).

Over residues 142-168 the composition is skewed to acidic residues; it reads EDDEEIDSDEEFGDSDQDEEDSDDEEI. Residues 142–281 form a disordered region; that stretch reads EDDEEIDSDE…NENNKKKQKN (140 aa). Basic and acidic residues predominate over residues 180 to 209; that stretch reads KITEISEVPESKKEKTPEPKKVPEPKKEQV. The segment covering 210 to 273 has biased composition (low complexity); it reads KQPTQPQQKK…NNKRPQNQNE (64 aa).

The chain is 32 kDa heat shock protein (hspC) from Dictyostelium discoideum (Social amoeba).